Reading from the N-terminus, the 454-residue chain is Bifunctional protein GlmU (454 aa).

The pyrophosphorylase stretch occupies residues 1–230 (MSGRFAVILA…LSETMGVNDR (230 aa)). UDP-N-acetyl-alpha-D-glucosamine-binding positions include 9-12 (LAAG), Lys-23, Gln-73, and 78-79 (GT). Asp-103 serves as a coordination point for Mg(2+). Gly-140, Glu-155, Asn-170, and Asn-228 together coordinate UDP-N-acetyl-alpha-D-glucosamine. Asn-228 lines the Mg(2+) pocket. The interval 231–251 (VALSQAEAAMRKRINEEWMRQ) is linker. Residues 252 to 454 (GVTIIDPQTT…NKDNYVKKDV (203 aa)) are N-acetyltransferase. Residues Arg-333 and Lys-351 each coordinate UDP-N-acetyl-alpha-D-glucosamine. The active-site Proton acceptor is His-363. Residues Tyr-366 and Asn-377 each coordinate UDP-N-acetyl-alpha-D-glucosamine. Residues 386–387 (NY), Ser-405, Ala-423, and Arg-440 contribute to the acetyl-CoA site.

It in the N-terminal section; belongs to the N-acetylglucosamine-1-phosphate uridyltransferase family. The protein in the C-terminal section; belongs to the transferase hexapeptide repeat family. In terms of assembly, homotrimer. Mg(2+) is required as a cofactor.

It is found in the cytoplasm. The catalysed reaction is alpha-D-glucosamine 1-phosphate + acetyl-CoA = N-acetyl-alpha-D-glucosamine 1-phosphate + CoA + H(+). The enzyme catalyses N-acetyl-alpha-D-glucosamine 1-phosphate + UTP + H(+) = UDP-N-acetyl-alpha-D-glucosamine + diphosphate. The protein operates within nucleotide-sugar biosynthesis; UDP-N-acetyl-alpha-D-glucosamine biosynthesis; N-acetyl-alpha-D-glucosamine 1-phosphate from alpha-D-glucosamine 6-phosphate (route II): step 2/2. It participates in nucleotide-sugar biosynthesis; UDP-N-acetyl-alpha-D-glucosamine biosynthesis; UDP-N-acetyl-alpha-D-glucosamine from N-acetyl-alpha-D-glucosamine 1-phosphate: step 1/1. It functions in the pathway bacterial outer membrane biogenesis; LPS lipid A biosynthesis. Catalyzes the last two sequential reactions in the de novo biosynthetic pathway for UDP-N-acetylglucosamine (UDP-GlcNAc). The C-terminal domain catalyzes the transfer of acetyl group from acetyl coenzyme A to glucosamine-1-phosphate (GlcN-1-P) to produce N-acetylglucosamine-1-phosphate (GlcNAc-1-P), which is converted into UDP-GlcNAc by the transfer of uridine 5-monophosphate (from uridine 5-triphosphate), a reaction catalyzed by the N-terminal domain. This is Bifunctional protein GlmU from Shouchella clausii (strain KSM-K16) (Alkalihalobacillus clausii).